Here is a 428-residue protein sequence, read N- to C-terminus: Tyrosine--tRNA ligase (428 aa).

Y41 contributes to the L-tyrosine binding site. The 'HIGH' region signature appears at 46-55 (PTADSLHLGH). Residues Y179 and Q183 each contribute to the L-tyrosine site. The 'KMSKS' region motif lies at 239 to 243 (KFGKT). K242 contributes to the ATP binding site. The S4 RNA-binding domain occupies 361 to 418 (ADLMQALVDSELQPSRGQARKTIASNAVTINGEKQSDPEYFFQDSDILFGRYTLLRRG).

It belongs to the class-I aminoacyl-tRNA synthetase family. TyrS type 1 subfamily. As to quaternary structure, homodimer.

The protein localises to the cytoplasm. It catalyses the reaction tRNA(Tyr) + L-tyrosine + ATP = L-tyrosyl-tRNA(Tyr) + AMP + diphosphate + H(+). Its function is as follows. Catalyzes the attachment of tyrosine to tRNA(Tyr) in a two-step reaction: tyrosine is first activated by ATP to form Tyr-AMP and then transferred to the acceptor end of tRNA(Tyr). This chain is Tyrosine--tRNA ligase, found in Citrobacter koseri (strain ATCC BAA-895 / CDC 4225-83 / SGSC4696).